The sequence spans 259 residues: Major prion protein (259 aa).

A signal peptide spans 1–24; that stretch reads MGKIQLGYWILVLFIVTWSDLGLC. Positions 25 to 235 are interaction with GRB2, ERI3 and SYN1; that stretch reads KKPKPRPGGG…EYEAAAQRAY (211 aa). A disordered region spans residues 29–110; that stretch reads PRPGGGWNSG…GYNKWKPDKP (82 aa). The Cu(2+) site is built by glycine 63, glycine 64, histidine 72, glycine 74, histidine 82, glycine 84, histidine 92, and glycine 94. The segment covering 91 to 101 has biased composition (gly residues); sequence PHGGSNWGQGG. Residues cysteine 184 and cysteine 219 are joined by a disulfide bond. Residues asparagine 186 and asparagine 202 are each glycosylated (N-linked (GlcNAc...) asparagine). Asparagine 236 is lipidated: GPI-anchor amidated asparagine. A propeptide spans 237 to 259 (removed in mature form); sequence MAFFSAPPVTLLFLSFLIFLIVS.

Belongs to the prion family. Monomer and homodimer. Has a tendency to aggregate into amyloid fibrils containing a cross-beta spine, formed by a steric zipper of superposed beta-strands. Soluble oligomers may represent an intermediate stage on the path to fibril formation. Copper binding may promote oligomerization. Interacts with GRB2, APP, ERI3/PRNPIP and SYN1. Mislocalized cytosolically exposed PrP interacts with MGRN1; this interaction alters MGRN1 subcellular location and causes lysosomal enlargement. Interacts with KIAA1191.

The protein localises to the cell membrane. Its subcellular location is the golgi apparatus. In terms of biological role, its primary physiological function is unclear. Has cytoprotective activity against internal or environmental stresses. May play a role in neuronal development and synaptic plasticity. May be required for neuronal myelin sheath maintenance. May play a role in iron uptake and iron homeostasis. Soluble oligomers are toxic to cultured neuroblastoma cells and induce apoptosis (in vitro). Association with GPC1 (via its heparan sulfate chains) targets PRNP to lipid rafts. Also provides Cu(2+) or Zn(2+) for the ascorbate-mediated GPC1 deaminase degradation of its heparan sulfate side chains. This Trichosurus vulpecula (Brush-tailed possum) protein is Major prion protein (PRNP).